The sequence spans 436 residues: GTPase Der (436 aa).

EngA-type G domains are found at residues 4-167 and 175-351; these read PTVA…PVEE and IRFS…ESQN. Residues 10 to 17, 57 to 61, 119 to 122, 181 to 188, 229 to 233, and 294 to 297 each bind GTP; these read GRPNVGKS, DTGGI, NKVD, DTAGM, and NKWD. A KH-like domain is found at 352 to 436; the sequence is KRIPSAVLND…PINLIARKRK (85 aa).

The protein belongs to the TRAFAC class TrmE-Era-EngA-EngB-Septin-like GTPase superfamily. EngA (Der) GTPase family. In terms of assembly, associates with the 50S ribosomal subunit.

GTPase that plays an essential role in the late steps of ribosome biogenesis. The polypeptide is GTPase Der (Streptococcus agalactiae serotype III (strain NEM316)).